The sequence spans 282 residues: Bis(5'-nucleosyl)-tetraphosphatase, symmetrical (282 aa).

The protein belongs to the Ap4A hydrolase family.

The enzyme catalyses P(1),P(4)-bis(5'-adenosyl) tetraphosphate + H2O = 2 ADP + 2 H(+). Hydrolyzes diadenosine 5',5'''-P1,P4-tetraphosphate to yield ADP. This chain is Bis(5'-nucleosyl)-tetraphosphatase, symmetrical, found in Enterobacter sp. (strain 638).